The chain runs to 389 residues: Phosphopentomutase (389 aa).

Mn(2+)-binding residues include aspartate 9, aspartate 282, histidine 287, aspartate 323, histidine 324, and histidine 335.

The protein belongs to the phosphopentomutase family. It depends on Mn(2+) as a cofactor.

The protein resides in the cytoplasm. It catalyses the reaction 2-deoxy-alpha-D-ribose 1-phosphate = 2-deoxy-D-ribose 5-phosphate. The catalysed reaction is alpha-D-ribose 1-phosphate = D-ribose 5-phosphate. It participates in carbohydrate degradation; 2-deoxy-D-ribose 1-phosphate degradation; D-glyceraldehyde 3-phosphate and acetaldehyde from 2-deoxy-alpha-D-ribose 1-phosphate: step 1/2. Functionally, isomerase that catalyzes the conversion of deoxy-ribose 1-phosphate (dRib-1-P) and ribose 1-phosphate (Rib-1-P) to deoxy-ribose 5-phosphate (dRib-5-P) and ribose 5-phosphate (Rib-5-P), respectively. In Kosmotoga olearia (strain ATCC BAA-1733 / DSM 21960 / TBF 19.5.1), this protein is Phosphopentomutase.